The sequence spans 185 residues: Elongation factor P (185 aa).

It belongs to the elongation factor P family.

Its subcellular location is the cytoplasm. Its pathway is protein biosynthesis; polypeptide chain elongation. Functionally, involved in peptide bond synthesis. Stimulates efficient translation and peptide-bond synthesis on native or reconstituted 70S ribosomes in vitro. Probably functions indirectly by altering the affinity of the ribosome for aminoacyl-tRNA, thus increasing their reactivity as acceptors for peptidyl transferase. The polypeptide is Elongation factor P (Clostridium kluyveri (strain ATCC 8527 / DSM 555 / NBRC 12016 / NCIMB 10680 / K1)).